The chain runs to 593 residues: A-type ATP synthase subunit A (593 aa).

236–243 (GPFGSGKT) contributes to the ATP binding site.

The protein belongs to the ATPase alpha/beta chains family. In terms of assembly, has multiple subunits with at least A(3), B(3), C, D, E, F, H, I and proteolipid K(x).

The protein resides in the cell membrane. The enzyme catalyses ATP + H2O + 4 H(+)(in) = ADP + phosphate + 5 H(+)(out). Component of the A-type ATP synthase that produces ATP from ADP in the presence of a proton gradient across the membrane. The A chain is the catalytic subunit. This chain is A-type ATP synthase subunit A, found in Pyrobaculum islandicum (strain DSM 4184 / JCM 9189 / GEO3).